The primary structure comprises 1372 residues: DNA-directed RNA polymerase subunit beta (1372 aa).

This sequence belongs to the RNA polymerase beta chain family. As to quaternary structure, the RNAP catalytic core consists of 2 alpha, 1 beta, 1 beta' and 1 omega subunit. When a sigma factor is associated with the core the holoenzyme is formed, which can initiate transcription.

The enzyme catalyses RNA(n) + a ribonucleoside 5'-triphosphate = RNA(n+1) + diphosphate. Functionally, DNA-dependent RNA polymerase catalyzes the transcription of DNA into RNA using the four ribonucleoside triphosphates as substrates. In Nitratidesulfovibrio vulgaris (strain DSM 19637 / Miyazaki F) (Desulfovibrio vulgaris), this protein is DNA-directed RNA polymerase subunit beta.